The sequence spans 664 residues: DCC-interacting protein 13-beta (664 aa).

A required for RAB5A binding region spans residues 1-428; sequence MPAVDKLLLE…NSEMENENDK (428 aa). Residues 3–268 form the BAR domain; sequence AVDKLLLEEA…ESVYTPDSDV (266 aa). A PH domain is found at 277–375; sequence LIQKAGYLNL…WICAINNISR (99 aa). The 150-residue stretch at 488–637 folds into the PID domain; sequence SLLQQMFIVR…LMLSIPLTND (150 aa). The segment at 643-664 is disordered; the sequence is LNDQPDDDDGNPNEHRGAESEA. The segment covering 654 to 664 has biased composition (basic and acidic residues); that stretch reads PNEHRGAESEA.

Homodimer. Homotetramer. Binds RAB5A/Rab5 through an N-terminal domain. This interaction is essential for its recruitment to endosomal membranes as well as its role in cell proliferation. Binds subunits of the NuRD/MeCP1 complex. Interacts with FSHR; interaction is independent of follicle stimulating hormone stimulation. Interacts with APPL1; the interaction is decreased by adiponectin in a time-dependent manner. Forms a complex comprising APPL1, RUVBL2, CTNNB1, HDAC1 and HDAC2; interaction reduces interaction between CTNNB1, HDAC1, HDAC2 and RUVBL2 leading to the decrease of deacetylase activity of this complex; affects the recruitment of repressive complexes to the Wnt target genes. Interacts (via BAR domain) with TBC1D1; interaction is dependent of TBC1D1 phosphorylation at 'Ser-235'; interaction diminishes the phosphorylation of TBC1D1 at 'Thr-596', resulting in inhibition of SLC2A4 translocation and glucose uptake. Interacts with ANXA2; targets APPL2 to endosomes and acting in parallel to RAB5A. Interacts with RAB31 (in GTP-bound form); interaction contributes to or enhances recruitment of APPL2 to the phagosomes; interaction enhances Fc-gamma receptor-mediated phagocytosis through PI3K/Akt signaling in macrophages. Interacts with PIK3R1; forms a complex with PIK3R1 and APPL1. Interacts (via BAR domain) with ADIPOR1; hinders the accessibility of APPL1 to ADIPOR1; negatively regulates adiponectin signaling; ADIPOQ dissociates this interaction and facilitates the recruitment of APPL1 to ADIPOR1. Interacts (via BAR domain) with ADIPOR2; ADIPOQ dissociates this interaction. High levels in brain, heart, kidney and skeletal muscle.

The protein localises to the early endosome membrane. It localises to the nucleus. Its subcellular location is the cell membrane. The protein resides in the endosome membrane. It is found in the cytoplasm. The protein localises to the cytoplasmic vesicle. It localises to the phagosome. Its subcellular location is the cell projection. The protein resides in the ruffle. It is found in the ruffle membrane. The protein localises to the phagosome membrane. Functionally, multifunctional adapter protein that binds to various membrane receptors, nuclear factors and signaling proteins to regulate many processes, such as cell proliferation, immune response, endosomal trafficking and cell metabolism. Regulates signaling pathway leading to cell proliferation through interaction with RAB5A and subunits of the NuRD/MeCP1 complex. Plays a role in immune response by modulating phagocytosis, inflammatory and innate immune responses. In macrophages, enhances Fc-gamma receptor-mediated phagocytosis through interaction with RAB31 leading to activation of PI3K/Akt signaling. In response to LPS, modulates inflammatory responses by playing a key role on the regulation of TLR4 signaling and in the nuclear translocation of RELA/NF-kappa-B p65 and the secretion of pro- and anti-inflammatory cytokines. Also functions as a negative regulator of innate immune response via inhibition of AKT1 signaling pathway by forming a complex with APPL1 and PIK3R1. Plays a role in endosomal trafficking of TGFBR1 from the endosomes to the nucleus. Plays a role in cell metabolism by regulating adiponecting ans insulin signaling pathways and adaptative thermogenesis. In muscle, negatively regulates adiponectin-simulated glucose uptake and fatty acid oxidation by inhibiting adiponectin signaling pathway through APPL1 sequestration thereby antagonizing APPL1 action. In muscles, negatively regulates insulin-induced plasma membrane recruitment of GLUT4 and glucose uptake through interaction with TBC1D1. Plays a role in cold and diet-induced adaptive thermogenesis by activating ventromedial hypothalamus (VMH) neurons throught AMPK inhibition which enhances sympathetic outflow to subcutaneous white adipose tissue (sWAT), sWAT beiging and cold tolerance. Also plays a role in other signaling pathways namely Wnt/beta-catenin, HGF and glucocorticoid receptor signaling. Positive regulator of beta-catenin/TCF-dependent transcription through direct interaction with RUVBL2/reptin resulting in the relief of RUVBL2-mediated repression of beta-catenin/TCF target genes by modulating the interactions within the beta-catenin-reptin-HDAC complex. May affect adult neurogenesis in hippocampus and olfactory system via regulating the sensitivity of glucocorticoid receptor. Required for fibroblast migration through HGF cell signaling. The polypeptide is DCC-interacting protein 13-beta (Homo sapiens (Human)).